The following is a 356-amino-acid chain: Alanine racemase (356 aa).

Lysine 35 serves as the catalytic Proton acceptor; specific for D-alanine. An N6-(pyridoxal phosphate)lysine modification is found at lysine 35. Arginine 130 contacts substrate. Tyrosine 253 functions as the Proton acceptor; specific for L-alanine in the catalytic mechanism. Position 301 (methionine 301) interacts with substrate.

Belongs to the alanine racemase family. Pyridoxal 5'-phosphate serves as cofactor.

It catalyses the reaction L-alanine = D-alanine. The protein operates within amino-acid biosynthesis; D-alanine biosynthesis; D-alanine from L-alanine: step 1/1. Functionally, catalyzes the interconversion of L-alanine and D-alanine. May also act on other amino acids. This is Alanine racemase (alr) from Burkholderia mallei (strain NCTC 10229).